We begin with the raw amino-acid sequence, 183 residues long: Putative manganese efflux pump MntP 1 (183 aa).

A run of 6 helical transmembrane segments spans residues 6–26 (LFLL…CIGI), 36–56 (IIFV…GGYI), 64–84 (IVPI…ILMI), 100–120 (IMYL…GFTT), 130–150 (LFMS…LGII), and 158–178 (ISII…LFGL).

The protein belongs to the MntP (TC 9.B.29) family.

It is found in the cell membrane. Functionally, probably functions as a manganese efflux pump. In Clostridium botulinum (strain Langeland / NCTC 10281 / Type F), this protein is Putative manganese efflux pump MntP 1.